Here is a 549-residue protein sequence, read N- to C-terminus: Protein wntless homolog (549 aa).

The signal sequence occupies residues 1–34 (MAGGAVIENLSNRKLFVIFAGLLVIQIMFFLIGA). The Lumenal portion of the chain corresponds to 36–236 (YAPSPSSYME…RLIEIHQNGG (201 aa)). A helical transmembrane segment spans residues 237-257 (FTLVWLWTKTFMTPVVAICLW). Residues 258-275 (WYYNRINQLARNPLLLER) lie on the Cytoplasmic side of the membrane. Residues 276 to 296 (AILLLGLSLVILDFPIEWISL) traverse the membrane as a helical segment. Residues 297 to 310 (TYRIPFLLLISDLR) are Lumenal-facing. A helical membrane pass occupies residues 311–331 (QGLFYTVLFSFWLIFAGEHLI). Topologically, residues 332 to 345 (DDNTRNNLKSYRFN) are cytoplasmic. The helical transmembrane segment at 346-366 (LSFIITASLGLLIYDLIERGI) threads the bilayer. At 367–383 (QLYDPFYSVWSSPTGSQ) the chain is on the lumenal side. A helical transmembrane segment spans residues 384 to 404 (IAYFAIFISAISTVAYFIFLF). The Cytoplasmic segment spans residues 405 to 439 (FKIARVWSTIKSKRSAQIYQTSENRRLKVEGVIYR). Residues 440–460 (FKFLMLFTLLCSAFTIAAYFM) form a helical membrane-spanning segment. Topologically, residues 461–483 (KQYGEAQLHGDEARDGFLTGSTS) are lumenal. A helical transmembrane segment spans residues 484–504 (AFFTGAFGMCNIYVLLLLAMY). At 505-549 (APSHKHYRGASQLIDENDDDEIMEDPSNQHTESNAMTTFLKPSTD) the chain is on the cytoplasmic side. Residues 524 to 549 (DEIMEDPSNQHTESNAMTTFLKPSTD) are disordered. Over residues 530–549 (PSNQHTESNAMTTFLKPSTD) the composition is skewed to polar residues.

The protein belongs to the wntless family. Expressed in the tail hypodermis, stomatointestinal muscle, the mesoblast cell M and its descendants, CAN neurons, the developing vulva, the pharynx and the pharyngeal intestinal valve.

It is found in the cell membrane. Its subcellular location is the early endosome membrane. The protein localises to the golgi apparatus membrane. The protein resides in the basal cell membrane. It localises to the late endosome membrane. Functionally, probable sorting receptor which regulates endocytosis and secretion of the wnt ligand egl-20. Recycling of mig-14 from the plasma membrane to the Golgi apparatus by the retromer complex is essential for its function. Its endosomal trafficking is regulated by its association with sorting nexin snx-3 on early endosomes and the mtm-6/mtm-9 myotubularin complex. Required in embryonic development for endoderm specification and the correct positioning and orientation of the mitotic spindles and division planes in blastomere cells. Functions during vulval development, playing a role in vulval precursor cell fate specification. During development, specifically regulates the migration of HSN neurons, the left Q neuroblast (QL) and its descendants and the distal tip cells of the gonads. Positioning of Q neuroblasts may be both dependent and independent of hox gene mab-5. Involved in establishing ALM and PLM neuronal cell polarity. The sequence is that of Protein wntless homolog from Caenorhabditis elegans.